We begin with the raw amino-acid sequence, 177 residues long: Ubiquinol-cytochrome c reductase iron-sulfur subunit (177 aa).

A helical transmembrane segment spans residues 18-38 (MVLTASSVAAVGAVCTLWPLV). In terms of domain architecture, Rieske spans 88 to 175 (ARAVKMSELI…YTFISDKKIR (88 aa)). Residues Cys-120, His-122, Cys-139, and His-142 each coordinate [2Fe-2S] cluster. Cys-125 and Cys-141 are oxidised to a cystine.

This sequence belongs to the Rieske iron-sulfur protein family. As to quaternary structure, the main subunits of complex b-c1 are: cytochrome b, cytochrome c1 and the Rieske protein. The cofactor is [2Fe-2S] cluster.

Its subcellular location is the cell membrane. It catalyses the reaction a quinol + 2 Fe(III)-[cytochrome c](out) = a quinone + 2 Fe(II)-[cytochrome c](out) + 2 H(+)(out). Component of the ubiquinol-cytochrome c reductase complex (complex III or cytochrome b-c1 complex), which is a respiratory chain that generates an electrochemical potential coupled to ATP synthesis. This chain is Ubiquinol-cytochrome c reductase iron-sulfur subunit (petA), found in Rickettsia felis (strain ATCC VR-1525 / URRWXCal2) (Rickettsia azadi).